Reading from the N-terminus, the 239-residue chain is Ribosomal RNA small subunit methyltransferase G (239 aa).

S-adenosyl-L-methionine contacts are provided by residues glycine 75, leucine 80, 126-127 (AE), and arginine 142.

Belongs to the methyltransferase superfamily. RNA methyltransferase RsmG family.

It is found in the cytoplasm. In terms of biological role, specifically methylates the N7 position of guanine in position 518 of 16S rRNA. This chain is Ribosomal RNA small subunit methyltransferase G, found in Streptomyces coelicolor (strain ATCC BAA-471 / A3(2) / M145).